The following is a 28-amino-acid chain: MSSGGLLLLLGLLTLCAELTPVSSKDRH.

Positions 1-24 are cleaved as a signal peptide; sequence MSSGGLLLLLGLLTLCAELTPVSS.

Heterodimer; disulfide-linked. The A chains have phospholipase A2 activity and the B chains show homology with the basic protease inhibitors. As to expression, expressed by the venom gland.

Its subcellular location is the secreted. Its function is as follows. Beta-1-bungarotoxin is a presynaptic neurotoxin of the venom. The B chain is homologous to venom basic protease inhibitors but has no protease inhibitor activity and blocks voltage-gated potassium channels (Kv). The chain is Beta-bungarotoxin B chain-like from Bungarus multicinctus (Many-banded krait).